An 857-amino-acid polypeptide reads, in one-letter code: Leucine--tRNA ligase (857 aa).

Positions 42–52 (PYPSGNLHMGH) match the 'HIGH' region motif. Residues 615-619 (KMSKS) carry the 'KMSKS' region motif. Position 618 (Lys618) interacts with ATP.

It belongs to the class-I aminoacyl-tRNA synthetase family.

It localises to the cytoplasm. It catalyses the reaction tRNA(Leu) + L-leucine + ATP = L-leucyl-tRNA(Leu) + AMP + diphosphate. In Thermosynechococcus vestitus (strain NIES-2133 / IAM M-273 / BP-1), this protein is Leucine--tRNA ligase.